The following is a 2788-amino-acid chain: E3 ubiquitin-protein ligase UBR5 (2788 aa).

Residues 68 to 78 (RLELGKPDNND) show a composition bias toward basic and acidic residues. The segment at 68-165 (RLELGKPDNN…DRGSGLLGSQ (98 aa)) is disordered. The segment covering 84-101 (SSSGTGRTSRPGRTSDSP) has biased composition (low complexity). Position 100 is a phosphoserine (S100). Positions 125–134 (GVGGSGGGSS) are enriched in gly residues. One can recognise a UBA domain in the interval 174–216 (VIPEELISQAQVVLQGKSRSVIIRELQRTNLDVNLAVNNLLSR). Position 317 is a phosphoserine (S317). Residues 318–337 (FDNERGSTSKEGEPNPDKKN) show a composition bias toward basic and acidic residues. The disordered stretch occupies residues 318–343 (FDNERGSTSKEGEPNPDKKNTPVQSP). A phosphoserine mark is found at S342 and S567. Residues 572–593 (KSMEKASKTIETKPESKQEPVK) show a composition bias toward basic and acidic residues. The tract at residues 572–636 (KSMEKASKTI…PAPKEEEKVN (65 aa)) is disordered. S601 is modified (phosphoserine). The segment covering 603-617 (ASTCSDASSIASSAS) has biased composition (low complexity). T626 is modified (phosphothreonine). Residues S797, S917, and S1007 each carry the phosphoserine modification. Disordered stretches follow at residues 988–1024 (AGLGRHEAGASSSDHQDPVSPPIAPPSWVPDPPSMDP) and 1041–1064 (TAATGGGQGPSTSTIPGPSTEPSV). Residues 1006–1022 (VSPPIAPPSWVPDPPSM) are compositionally biased toward pro residues. A compositionally biased stretch (polar residues) spans 1050–1062 (PSTSTIPGPSTEP). Phosphothreonine is present on residues T1104 and T1124. The UBR-type zinc-finger motif lies at 1166-1234 (DTCSFTWTGA…EKCKCKTLIA (69 aa)). S1216, S1297, S1344, S1364, and S1470 each carry phosphoserine. Positions 1288–1308 (REDRNRKTASPDDSDMPDHDL) are disordered. The interval 1504-1729 (SVEPLPPRPS…PSSTSTPAAS (226 aa)) is disordered. The span at 1513–1526 (SSDQSSSSSQSQSS) shows a compositional bias: low complexity. Over residues 1527-1542 (YIIRNPQQRRISQSQP) the composition is skewed to polar residues. Phosphoserine is present on S1538. 2 stretches are compositionally biased toward acidic residues: residues 1548 to 1563 (EEQDDIVSADVEEVEV) and 1594 to 1603 (HDEDGSDMEL). Positions 1618–1627 (NHSNQDNASG) are enriched in polar residues. 3 stretches are compositionally biased toward low complexity: residues 1630-1646 (SVVTAATAGSEAGASSV), 1657-1670 (SNDSSDSDSSSSQS), and 1715-1729 (AASTAPSSTSTPAAS). The residue at position 1725 (T1725) is a Phosphothreonine. S1730 bears the Phosphoserine mark. At Y1735 the chain carries Phosphotyrosine. Phosphoserine is present on S1769. The segment at 1848–1881 (LASAGDPGHPNHPLHASQNSARRERMTAREEASL) is disordered. Residues 1868 to 1881 (ARRERMTAREEASL) show a composition bias toward basic and acidic residues. At T1959 the chain carries Phosphothreonine. The segment at 1974–2011 (GIDNEDSEHENDDDTSQSATLNDKDDESLPAETGQNHP) is disordered. Acidic residues predominate over residues 1975–1988 (IDNEDSEHENDDDT). Phosphoserine occurs at positions 1980, 2016, and 2018. T2020 carries the post-translational modification Phosphothreonine. S2066 is modified (phosphoserine). The interval 2106-2132 (NRQKKAGEDQSMLAEEADSSKPGPSAH) is disordered. T2203 bears the Phosphothreonine mark. 2 positions are modified to phosphoserine: S2231 and S2279. The interval 2313-2383 (HTSLMQRLRN…SDDPDPLPAH (71 aa)) is disordered. Basic and acidic residues-rich tracts occupy residues 2322–2338 (NRGERDREREREREMRR) and 2346–2358 (SRRDRDRDFRRQL). Positions 2367–2444 (PASEGNPSDD…AMELIVAHGR (78 aa)) constitute a PABC domain. In terms of domain architecture, HECT spans 2451 to 2788 (ILDLGLLDSS…AIKTKNFGFV (338 aa)). 3 positions are modified to phosphoserine: S2459, S2473, and S2475. A disordered region spans residues 2463–2490 (VQENRKRHGSSRSVVDMDLDDTDDGDDN). Acidic residues predominate over residues 2479–2489 (MDLDDTDDGDD). C2757 serves as the catalytic Glycyl thioester intermediate.

The protein belongs to the UBR5 family. In terms of assembly, homotetramer; composed of a dimer of dimers. Associates with CDK9 and TFIIS/TCEA1 and forms a transcription regulatory complex made of CDK9, RNAP II, UBR5 and TFIIS/TCEA1 that can stimulate target gene transcription (e.g. gamma fibrinogen/FGG) by recruiting their promoters. Associates with the E3 ligase complex containing DYRK2, EDD/UBR5, DDB1 and DCAF1 proteins (EDVP complex). Binds TOPBP1. Interacts with PIH1D1. Interacts with CIB1. As to expression, highest levels found in testis. Also present in liver, kidney, lung and brain.

Its subcellular location is the nucleus. The protein localises to the cytoplasm. The enzyme catalyses S-ubiquitinyl-[E2 ubiquitin-conjugating enzyme]-L-cysteine + [acceptor protein]-L-lysine = [E2 ubiquitin-conjugating enzyme]-L-cysteine + N(6)-ubiquitinyl-[acceptor protein]-L-lysine.. Its pathway is protein modification; protein ubiquitination. Functionally, E3 ubiquitin-protein ligase involved in different protein quality control pathways in the cytoplasm and nucleus. Mainly acts as a ubiquitin chain elongator that extends pre-ubiquitinated substrates. Component of the N-end rule pathway: ubiquitinates proteins bearing specific N-terminal residues that are destabilizing according to the N-end rule, leading to their degradation. Recognizes type-1 N-degrons, containing positively charged amino acids (Arg, Lys and His). Together with UBR4, part of a cytoplasm protein quality control pathway that prevents protein aggregation by catalyzing assembly of heterotypic 'Lys-11'-/'Lys-48'-linked branched ubiquitin chains on aggregated proteins, leading to substrate recognition by the segregase p97/VCP and degradation by the proteasome: UBR5 is probably branching multiple 'Lys-48'-linked chains of substrates initially modified with mixed conjugates by UBR4. Together with ITCH, catalyzes 'Lys-48'-/'Lys-63'-branched ubiquitination of TXNIP, leading to its degradation: UBR5 mediates branching of 'Lys-48'-linked chains of substrates initially modified with 'Lys-63'-linked conjugates by ITCH. Catalytic component of a nuclear protein quality control pathway that mediates ubiquitination and degradation of unpaired transcription factors (i.e. transcription factors that are not assembled into functional multiprotein complexes): specifically recognizes and binds degrons that are not accessible when transcription regulators are associated with their coactivators. Ubiquitinates various unpaired transcription regulator (MYC, SUPT4H1, SUPT5H, CDC20 and MCRS1), as well as ligand-bound nuclear receptors (ESR1, NR1H3, NR3C1, PGR, RARA, RXRA AND VDR) that are not associated with their nuclear receptor coactivators (NCOAs). Involved in maturation and/or transcriptional regulation of mRNA by mediating polyubiquitination and activation of CDK9. Also acts as a regulator of DNA damage response by acting as a suppressor of RNF168, an E3 ubiquitin-protein ligase that promotes accumulation of 'Lys-63'-linked histone H2A and H2AX at DNA damage sites, thereby acting as a guard against excessive spreading of ubiquitinated chromatin at damaged chromosomes. Regulates DNA topoisomerase II binding protein (TopBP1) in the DNA damage response. Ubiquitinates acetylated PCK1. Acts as a positive regulator of the canonical Wnt signaling pathway by mediating (1) ubiquitination and stabilization of CTNNB1, and (2) 'Lys-48'-linked ubiquitination and degradation of TLE3. Promotes disassembly of the mitotic checkpoint complex (MCC) from the APC/C complex by catalyzing ubiquitination of BUB1B, BUB3 and CDC20. Plays an essential role in extraembryonic development. Required for the maintenance of skeletal tissue homeostasis by acting as an inhibitor of hedgehog (HH) signaling. The protein is E3 ubiquitin-protein ligase UBR5 (Ubr5) of Rattus norvegicus (Rat).